An 89-amino-acid chain; its full sequence is Small ribosomal subunit protein uS14A (89 aa).

This sequence belongs to the universal ribosomal protein uS14 family. In terms of assembly, part of the 30S ribosomal subunit. Contacts proteins S3 and S10.

Functionally, binds 16S rRNA, required for the assembly of 30S particles and may also be responsible for determining the conformation of the 16S rRNA at the A site. The polypeptide is Small ribosomal subunit protein uS14A (Ligilactobacillus salivarius (strain UCC118) (Lactobacillus salivarius)).